Consider the following 199-residue polypeptide: Recombination protein RecR (199 aa).

The segment at 58–73 (CVNCGNIGTGDLCEIC) adopts a C4-type zinc-finger fold. Positions 81 to 176 (GEICVVEDVA…TLSSLAQGVP (96 aa)) constitute a Toprim domain.

It belongs to the RecR family.

May play a role in DNA repair. It seems to be involved in an RecBC-independent recombinational process of DNA repair. It may act with RecF and RecO. The protein is Recombination protein RecR of Jannaschia sp. (strain CCS1).